Consider the following 134-residue polypeptide: Cytochrome b5 (134 aa).

Alanine 2 bears the N-acetylalanine mark. An N6-acetyllysine mark is found at lysine 7, lysine 10, and lysine 19. Positions 9-85 constitute a Cytochrome b5 heme-binding domain; sequence VKYYTLEEIQ…SKTFIIGELH (77 aa). Heme contacts are provided by histidine 44 and histidine 68. A helical membrane pass occupies residues 109–131; that stretch reads WWTNWLIPAISALFVALIYHLYT.

Belongs to the cytochrome b5 family.

The protein resides in the endoplasmic reticulum membrane. It is found in the microsome membrane. In terms of biological role, cytochrome b5 is a membrane-bound hemoprotein functioning as an electron carrier for several membrane-bound oxygenases. In Bos taurus (Bovine), this protein is Cytochrome b5 (CYB5A).